Here is a 443-residue protein sequence, read N- to C-terminus: Packaging protein 1 (443 aa).

The segment at 1–75 (MSGAADGTVP…PEAAQPPPSR (75 aa)) is disordered. Basic and acidic residues predominate over residues 13–56 (EDTHQEDSGERECEQRPVHSGREATGESDPALERPDHGERHGPE). 169–176 (GPTGSGKS) contacts ATP. Residues 433–443 (VSYANKRKWYD) form a DNA-binding region.

It belongs to the adenoviridae packaging protein 1 family. In terms of assembly, homodimer. Part of a genome packaging complex composed of packaging proteins 1, 2 and 3; this complex specifically binds to the packaging sequence on the left end of viral genomic DNA and performs packaging of the viral genome. Interacts with protein 33K.

Its subcellular location is the virion. It localises to the host nucleus. The protein localises to the host nucleoplasm. It is found in the host nucleolus. Functionally, component of the packaging machinery which encapsidates the viral DNA into preformed capsids and transcriptional activator of the viral major late promoter (MLP). Binds, along with packaging proteins 2 and 3, to the specific packaging sequence on the left end of viral genomic DNA and displays ATPase activity thereby providing the power stroke of the packaging machinery. The activity of packaging protein IVa2 is stimulated by protein 33K which acts as a terminase. May be the protein that pumps DNA into the capsid powered by ATP hydrolysis. Specifically binds to the 5'-CG-3' nucleotides of the repeats making up the packaging sequence. Component of the DEF-A and DEF-B transcription factors that bind downstream elements of the major late promoter (MLP), and stimulate transcription from the MLP after initiation of viral DNA replication. DEF-A is a heterodimer packaging proteins 1 and 2 and DEF-B is a homodimer of packaging protein 1. In Pantherophis guttatus (Corn snake), this protein is Packaging protein 1.